Reading from the N-terminus, the 300-residue chain is Estradiol 17-beta-dehydrogenase 11 (300 aa).

An N-terminal signal peptide occupies residues 1–18 (MKILLDLLLLLPLLIVCC). 40 to 67 (LITGAGHGIGRLTAYEFAKLKSKLVLWD) is a binding site for NADP(+). Serine 172 lines the substrate pocket. Tyrosine 185 functions as the Proton acceptor in the catalytic mechanism. Lysine 189 provides a ligand contact to NADP(+).

The protein belongs to the short-chain dehydrogenases/reductases (SDR) family. 17-beta-HSD 3 subfamily.

The protein localises to the endoplasmic reticulum. It localises to the lipid droplet. The catalysed reaction is 17beta-estradiol + NAD(+) = estrone + NADH + H(+). It catalyses the reaction 17beta-estradiol + NADP(+) = estrone + NADPH + H(+). In terms of biological role, can convert androstan-3-alpha,17-beta-diol (3-alpha-diol) to androsterone in vitro, suggesting that it may participate in androgen metabolism during steroidogenesis. May act by metabolizing compounds that stimulate steroid synthesis and/or by generating metabolites that inhibit it. Has no activity toward DHEA (dehydroepiandrosterone), or A-dione (4-androste-3,17-dione), and only a slight activity toward testosterone to A-dione. The sequence is that of Estradiol 17-beta-dehydrogenase 11 (HSD17B11) from Macaca fascicularis (Crab-eating macaque).